The following is a 197-amino-acid chain: NADH-quinone oxidoreductase subunit C (197 aa).

Belongs to the complex I 30 kDa subunit family. NDH-1 is composed of 14 different subunits. Subunits NuoB, C, D, E, F, and G constitute the peripheral sector of the complex.

The protein localises to the cell inner membrane. The enzyme catalyses a quinone + NADH + 5 H(+)(in) = a quinol + NAD(+) + 4 H(+)(out). In terms of biological role, NDH-1 shuttles electrons from NADH, via FMN and iron-sulfur (Fe-S) centers, to quinones in the respiratory chain. The immediate electron acceptor for the enzyme in this species is believed to be ubiquinone. Couples the redox reaction to proton translocation (for every two electrons transferred, four hydrogen ions are translocated across the cytoplasmic membrane), and thus conserves the redox energy in a proton gradient. This chain is NADH-quinone oxidoreductase subunit C, found in Rickettsia prowazekii (strain Madrid E).